Consider the following 383-residue polypeptide: Succinyl-diaminopimelate desuccinylase (383 aa).

Residue His73 coordinates Zn(2+). Residue Asp75 is part of the active site. Zn(2+) is bound at residue Asp107. Glu141 functions as the Proton acceptor in the catalytic mechanism. Zn(2+) contacts are provided by Glu142, Glu170, and His356.

The protein belongs to the peptidase M20A family. DapE subfamily. As to quaternary structure, homodimer. Zn(2+) serves as cofactor. The cofactor is Co(2+).

It carries out the reaction N-succinyl-(2S,6S)-2,6-diaminopimelate + H2O = (2S,6S)-2,6-diaminopimelate + succinate. It participates in amino-acid biosynthesis; L-lysine biosynthesis via DAP pathway; LL-2,6-diaminopimelate from (S)-tetrahydrodipicolinate (succinylase route): step 3/3. Its function is as follows. Catalyzes the hydrolysis of N-succinyl-L,L-diaminopimelic acid (SDAP), forming succinate and LL-2,6-diaminopimelate (DAP), an intermediate involved in the bacterial biosynthesis of lysine and meso-diaminopimelic acid, an essential component of bacterial cell walls. The sequence is that of Succinyl-diaminopimelate desuccinylase from Pseudomonas entomophila (strain L48).